Here is a 40-residue protein sequence, read N- to C-terminus: Photosystem II reaction center protein J (40 aa).

A helical transmembrane segment spans residues 8–28 (IPLWLIGTVAGILIIGLLGVF).

The protein belongs to the PsbJ family. In terms of assembly, PSII is composed of 1 copy each of membrane proteins PsbA, PsbB, PsbC, PsbD, PsbE, PsbF, PsbH, PsbI, PsbJ, PsbK, PsbL, PsbM, PsbT, PsbX, PsbY, PsbZ, Psb30/Ycf12, at least 3 peripheral proteins of the oxygen-evolving complex and a large number of cofactors. It forms dimeric complexes.

It is found in the plastid. The protein resides in the chloroplast thylakoid membrane. In terms of biological role, one of the components of the core complex of photosystem II (PSII). PSII is a light-driven water:plastoquinone oxidoreductase that uses light energy to abstract electrons from H(2)O, generating O(2) and a proton gradient subsequently used for ATP formation. It consists of a core antenna complex that captures photons, and an electron transfer chain that converts photonic excitation into a charge separation. The protein is Photosystem II reaction center protein J of Nandina domestica (Heavenly bamboo).